A 526-amino-acid chain; its full sequence is ATP-dependent RNA helicase DBP3 (526 aa).

A compositionally biased stretch (basic and acidic residues) spans 1 to 33 (MVEEHKNKKRRQEDGPADVPEKKVKVSKSEKKD). The disordered stretch occupies residues 1–86 (MVEEHKNKKR…SSQGYTQSES (86 aa)). The segment covering 34 to 65 (KKEKKEKKEKKEKKEKKEKKEKKEKKEKKKKY) has biased composition (basic residues). The span at 69 to 86 (ATISGSAQSSQGYTQSES) shows a compositional bias: polar residues. The short motif at 118–144 (LSFDQIQLNSKISAVVNKFPTPTPIQS) is the Q motif element. Residues 147 to 318 (WPYLLSGKDV…STFMNQPVKV (172 aa)) enclose the Helicase ATP-binding domain. Residue 160–167 (AETGSGKT) participates in ATP binding. Residues 265–268 (DEAD) carry the DEAD box motif. Residues 334-496 (QIVEVIEPFD…PVPDELLKFG (163 aa)) form the Helicase C-terminal domain.

It belongs to the DEAD box helicase family. DDX5/DBP2 subfamily.

It is found in the nucleus. The protein resides in the nucleolus. The catalysed reaction is ATP + H2O = ADP + phosphate + H(+). In terms of biological role, ATP-dependent RNA helicase required for 60S ribosomal subunit synthesis. Involved in efficient pre-rRNA processing, predominantly at site A3, which is necessary for the normal formation of 25S and 5.8S rRNAs. The chain is ATP-dependent RNA helicase DBP3 (DBP3) from Scheffersomyces stipitis (strain ATCC 58785 / CBS 6054 / NBRC 10063 / NRRL Y-11545) (Yeast).